The following is a 38-amino-acid chain: Zinc-containing ferredoxin (38 aa).

The segment covering 1 to 11 (GIDPNFRTSRP) has biased composition (polar residues). Residues 1–38 (GIDPNFRTSRPVTGDHAGHKVYAPADPPVKEKALGIHG) form a disordered region. The N-terminal extension stretch occupies residues 1-38 (GIDPNFRTSRPVTGDHAGHKVYAPADPPVKEKALGIHG). Residues H16 and H19 each coordinate Zn(2+). The span at 28–38 (PVKEKALGIHG) shows a compositional bias: basic and acidic residues. K30 is subject to N6-methyllysine. H37 is a binding site for Zn(2+).

The cofactor is [3Fe-4S] cluster. [4Fe-4S] cluster serves as cofactor. Requires Zn(2+) as cofactor.

Ferredoxins are iron-sulfur proteins that transfer electrons in a wide variety of metabolic reactions. The protein is Zinc-containing ferredoxin (zfx) of Metallosphaera prunae.